A 144-amino-acid polypeptide reads, in one-letter code: Large ribosomal subunit protein uL15 (144 aa).

The disordered stretch occupies residues 1 to 53; the sequence is MRLNTLSPAEGAKHAPKRVGRGIGSGLGKTAGRGHKGQNSRSGGGVRRGFEGG. A compositionally biased stretch (gly residues) spans 21–31; the sequence is RGIGSGLGKTA.

This sequence belongs to the universal ribosomal protein uL15 family. Part of the 50S ribosomal subunit.

In terms of biological role, binds to the 23S rRNA. This is Large ribosomal subunit protein uL15 from Serratia proteamaculans (strain 568).